We begin with the raw amino-acid sequence, 386 residues long: 8-amino-7-oxononanoate synthase (386 aa).

Arginine 20 lines the substrate pocket. Pyridoxal 5'-phosphate is bound at residue 107-108 (GY). Histidine 132 contributes to the substrate binding site. Serine 178, histidine 206, and threonine 234 together coordinate pyridoxal 5'-phosphate. Lysine 237 is modified (N6-(pyridoxal phosphate)lysine). Threonine 351 provides a ligand contact to substrate.

The protein belongs to the class-II pyridoxal-phosphate-dependent aminotransferase family. BioF subfamily. In terms of assembly, homodimer. Pyridoxal 5'-phosphate serves as cofactor.

It carries out the reaction 6-carboxyhexanoyl-[ACP] + L-alanine + H(+) = (8S)-8-amino-7-oxononanoate + holo-[ACP] + CO2. It participates in cofactor biosynthesis; biotin biosynthesis. In terms of biological role, catalyzes the decarboxylative condensation of pimeloyl-[acyl-carrier protein] and L-alanine to produce 8-amino-7-oxononanoate (AON), [acyl-carrier protein], and carbon dioxide. The protein is 8-amino-7-oxononanoate synthase of Aromatoleum aromaticum (strain DSM 19018 / LMG 30748 / EbN1) (Azoarcus sp. (strain EbN1)).